We begin with the raw amino-acid sequence, 324 residues long: Phospho-N-acetylmuramoyl-pentapeptide-transferase (324 aa).

A run of 9 helical transmembrane segments spans residues 5 to 25 (VILF…PIFI), 51 to 71 (TPTM…IVMI), 77 to 97 (ISPE…LGFL), 117 to 137 (LIGQ…YQFA), 147 to 167 (VSFD…VGGS), 176 to 196 (LDGL…ILAW), 203 to 223 (VAIF…FNAH), 227 to 248 (VFMG…AILT), and 302 to 322 (VVVT…YIEV).

The protein belongs to the glycosyltransferase 4 family. MraY subfamily. The cofactor is Mg(2+).

Its subcellular location is the cell membrane. The enzyme catalyses UDP-N-acetyl-alpha-D-muramoyl-L-alanyl-gamma-D-glutamyl-meso-2,6-diaminopimeloyl-D-alanyl-D-alanine + di-trans,octa-cis-undecaprenyl phosphate = di-trans,octa-cis-undecaprenyl diphospho-N-acetyl-alpha-D-muramoyl-L-alanyl-D-glutamyl-meso-2,6-diaminopimeloyl-D-alanyl-D-alanine + UMP. Its pathway is cell wall biogenesis; peptidoglycan biosynthesis. Functionally, catalyzes the initial step of the lipid cycle reactions in the biosynthesis of the cell wall peptidoglycan: transfers peptidoglycan precursor phospho-MurNAc-pentapeptide from UDP-MurNAc-pentapeptide onto the lipid carrier undecaprenyl phosphate, yielding undecaprenyl-pyrophosphoryl-MurNAc-pentapeptide, known as lipid I. This Bacillus pumilus (strain SAFR-032) protein is Phospho-N-acetylmuramoyl-pentapeptide-transferase.